Reading from the N-terminus, the 370-residue chain is Cytochrome b (370 aa).

4 helical membrane-spanning segments follow: residues 30–50, 74–96, 109–129, and 175–195; these read FGSM…FLAF, WIFR…LHIF, VWMS…MGYV, and FFVL…GHLI. Residues H80 and H94 each coordinate heme b. Heme b is bound by residues H179 and H193. H198 is a binding site for a ubiquinone. The next 4 helical transmembrane spans lie at 221–240, 284–304, 316–336, and 342–362; these read YIGK…VLSL, VLGV…ALVN, FLVF…QCMV, and VLSP…LGIF.

This sequence belongs to the cytochrome b family. The main subunits of complex b-c1 are: cytochrome b, cytochrome c1 and the Rieske protein. The cofactor is heme b.

It is found in the mitochondrion inner membrane. Its function is as follows. Component of the ubiquinol-cytochrome c reductase complex (complex III or cytochrome b-c1 complex) that is part of the mitochondrial respiratory chain. The b-c1 complex mediates electron transfer from ubiquinol to cytochrome c. Contributes to the generation of a proton gradient across the mitochondrial membrane that is then used for ATP synthesis. The protein is Cytochrome b (ctb-1) of Caenorhabditis briggsae.